The primary structure comprises 438 residues: Ubiquitin carboxyl-terminal hydrolase 27 (438 aa).

The USP domain occupies 78-421 (RGLINLGNTC…EGYLLFYHKQ (344 aa)). C87 (nucleophile) is an active-site residue. The active-site Proton acceptor is H380.

The protein belongs to the peptidase C19 family. In terms of assembly, interacts with phosphorylated BCL2L11 isoform BIMEL; this interaction leads to BCL2L11 deubiquitination and stabilization.

Its subcellular location is the cytoplasm. It is found in the cytosol. The protein localises to the nucleus. It catalyses the reaction Thiol-dependent hydrolysis of ester, thioester, amide, peptide and isopeptide bonds formed by the C-terminal Gly of ubiquitin (a 76-residue protein attached to proteins as an intracellular targeting signal).. Its function is as follows. Deubiquitinase involved in innate antiviral immunity by mediating deubiquitination of CGAS and RIGI. Negatively regulates RIGI by mediating 'Lys-63'-linked deubiquitination of RIGI, inhibiting type I interferon signaling. Also regulates 'Lys-63'-linked ubiquitination level of MDA5/IFIH1. Acts as a positive regulator of the cGAS-STING pathway by catalyzing 'Lys-48'-linked deubiquitination of CGAS, thereby promoting its stabilization. Can reduce the levels of BCL2L11/BIM ubiquitination and stabilize BCL2L11 in response to the RAF-MAPK-degradation signal. By acting on BCL2L11 levels, may counteract the anti-apoptotic effects of MAPK activity. This is Ubiquitin carboxyl-terminal hydrolase 27 from Mus musculus (Mouse).